The sequence spans 287 residues: Probable 18S rRNA (guanine-N(7))-methyltransferase (287 aa).

Residues 214–287 are disordered; sequence GVEGEEYEQQ…FSGRKRGPKF (74 aa). Positions 217 to 228 are enriched in acidic residues; that stretch reads GEEYEQQEEEDS. The segment covering 234 to 245 has biased composition (basic residues); the sequence is SNRKRDRRRVTK. A compositionally biased stretch (basic and acidic residues) spans 253-278; that stretch reads KTKEWIMNKKDRQRKQGREIKNDSKF.

Belongs to the class I-like SAM-binding methyltransferase superfamily. BUD23/WBSCR22 family.

The protein resides in the nucleus. Its subcellular location is the nucleoplasm. It is found in the cytoplasm. The protein localises to the perinuclear region. It catalyses the reaction a guanosine in 18S rRNA + S-adenosyl-L-methionine = an N(7)-methylguanosine in 18S rRNA + S-adenosyl-L-homocysteine. Its function is as follows. S-adenosyl-L-methionine-dependent methyltransferase that specifically methylates the N(7) position of a guanine in 18S rRNA. Important for biogenesis end export of the 40S ribosomal subunit independent on its methyltransferase activity. In terms of biological role, S-adenosyl-L-methionine-dependent methyltransferase that specifically methylates the N(7) position of a guanine in 18S rRNA. Requires the methyltransferase adapter protein TRM112 for full rRNA methyltransferase activity. Involved in the pre-rRNA processing steps leading to small-subunit rRNA production independently of its RNA-modifying catalytic activity. Important for biogenesis end export of the 40S ribosomal subunit independent on its methyltransferase activity. This is Probable 18S rRNA (guanine-N(7))-methyltransferase from Dictyostelium discoideum (Social amoeba).